We begin with the raw amino-acid sequence, 199 residues long: Glycerol-3-phosphate acyltransferase (199 aa).

Helical transmembrane passes span 3–23 (IKIL…AYIV), 55–75 (VITL…ATFI), 79–99 (FSYS…TIFL), 113–133 (VFFA…GLAF), and 155–175 (YFLG…LLII).

The protein belongs to the PlsY family. Probably interacts with PlsX.

It is found in the cell inner membrane. It catalyses the reaction an acyl phosphate + sn-glycerol 3-phosphate = a 1-acyl-sn-glycero-3-phosphate + phosphate. Its pathway is lipid metabolism; phospholipid metabolism. In terms of biological role, catalyzes the transfer of an acyl group from acyl-phosphate (acyl-PO(4)) to glycerol-3-phosphate (G3P) to form lysophosphatidic acid (LPA). This enzyme utilizes acyl-phosphate as fatty acyl donor, but not acyl-CoA or acyl-ACP. This chain is Glycerol-3-phosphate acyltransferase, found in Endomicrobium trichonymphae.